The following is a 335-amino-acid chain: Phosphate acyltransferase (335 aa).

Belongs to the PlsX family. As to quaternary structure, homodimer. Probably interacts with PlsY.

It localises to the cytoplasm. It carries out the reaction a fatty acyl-[ACP] + phosphate = an acyl phosphate + holo-[ACP]. It participates in lipid metabolism; phospholipid metabolism. Functionally, catalyzes the reversible formation of acyl-phosphate (acyl-PO(4)) from acyl-[acyl-carrier-protein] (acyl-ACP). This enzyme utilizes acyl-ACP as fatty acyl donor, but not acyl-CoA. In Streptococcus suis (strain 98HAH33), this protein is Phosphate acyltransferase.